Reading from the N-terminus, the 198-residue chain is Interferon gamma (198 aa).

Positions 1–23 are cleaved as a signal peptide; it reads MMVSTARAVVCLSLCLCVCQVRG. N-linked (GlcNAc...) asparagine glycans are attached at residues asparagine 31, asparagine 42, and asparagine 174. The segment at 173–198 is disordered; it reads SNNTKMQRRRRRRRRQARKVKTPTRA. Residues 178 to 198 are compositionally biased toward basic residues; the sequence is MQRRRRRRRRQARKVKTPTRA.

This sequence belongs to the type II (or gamma) interferon family. In terms of assembly, homodimer.

Its subcellular location is the secreted. Functionally, cytokine which binds to interferon gamma receptor 1 (ifngr1). Also binds with lower affinity to interferon gamma receptor 1-like (ifngr1l). Has activating effects on macrophages and neutrophils. The chain is Interferon gamma from Paralichthys olivaceus (Bastard halibut).